A 274-amino-acid polypeptide reads, in one-letter code: Large ribosomal subunit protein uL2 (274 aa).

The disordered stretch occupies residues 195-274 (VGNSDHGLER…SKYIIERRKK (80 aa)). Basic residues-rich tracts occupy residues 207–220 (KAGR…RPRN) and 244–264 (PRSR…KKQS).

The protein belongs to the universal ribosomal protein uL2 family. As to quaternary structure, part of the 50S ribosomal subunit. Forms a bridge to the 30S subunit in the 70S ribosome.

Functionally, one of the primary rRNA binding proteins. Required for association of the 30S and 50S subunits to form the 70S ribosome, for tRNA binding and peptide bond formation. It has been suggested to have peptidyltransferase activity; this is somewhat controversial. Makes several contacts with the 16S rRNA in the 70S ribosome. This is Large ribosomal subunit protein uL2 from Bacteroides thetaiotaomicron (strain ATCC 29148 / DSM 2079 / JCM 5827 / CCUG 10774 / NCTC 10582 / VPI-5482 / E50).